The chain runs to 500 residues: MASRLTLLTLLLLLLAGDRASSNPNATSSSSQDPESLQDRGEGKVATTVISKMLFVEPILEVSSLPTTNSTTNSATKITANTTDEPTTQPTTEPTTQPTIQPTQPTTQLPTDSPTQPTTGSFCPGPVTLCSDLESHSTEAVLGDALVDFSLKLYHAFSAMKKVETNMAFSPFSIASLLTQVLLGAGENTKTNLESILSYPKDFTCVHQALKGFTTKGVTSVSQIFHSPDLAIRDTFVNASRTLYSSSPRVLSNNSDANLELINTWVAKNTNNKISRLLDSLPSDTRLVLLNAIYLSAKWKTTFDPKKTRMEPFHFKNSVIKVPMMNSKKYPVAHFIDQTLKAKVGQLQLSHNLSLVILVPQNLKHRLEDMEQALSPSVFKAIMEKLEMSKFQPTLLTLPRIKVTTSQDMLSIMEKLEFFDFSYDLNLCGLTEDPDLQVSAMQHQTVLELTETGVEAAAASAISVARTLLVFEVQQPFLFVLWDQQHKFPVFMGRVYDPRA.

The first 22 residues, 1–22 (MASRLTLLTLLLLLLAGDRASS), serve as a signal peptide directing secretion. Positions 20-31 (ASSNPNATSSSS) are enriched in low complexity. The disordered stretch occupies residues 20–43 (ASSNPNATSSSSQDPESLQDRGEG). Residue N25 is glycosylated (N-linked (GlcNAc...) (complex) asparagine). 2 O-linked (GalNAc...) threonine glycosylation sites follow: T47 and T48. An O-linked (GalNAc...) serine glycan is attached at S64. The segment at 65–118 (LPTTNSTTNSATKITANTTDEPTTQPTTEPTTQPTIQPTQPTTQLPTDSPTQPT) is disordered. A compositionally biased stretch (low complexity) spans 67 to 118 (TTNSTTNSATKITANTTDEPTTQPTTEPTTQPTIQPTQPTTQLPTDSPTQPT). N69 carries an N-linked (GlcNAc...) asparagine glycan. T71 carries an O-linked (GalNAc...) threonine glycan. Residue N81 is glycosylated (N-linked (GlcNAc...) asparagine). O-linked (GalNAc...) threonine glycans are attached at residues T83, T88, T92, and T96. A run of 7 repeats spans residues 85–88 (EPTT), 89–92 (QPTT), 93–96 (EPTT), 97–100 (QPTI), 101–104 (QPTQ), 105–108 (PTTQ), and 116–119 (QPTT). Residues 85 to 119 (EPTTQPTTEPTTQPTIQPTQPTTQLPTDSPTQPTT) are 7 X 4 AA tandem repeats of [QE]-P-T-[TQ]. 2 cysteine pairs are disulfide-bonded: C123-C428 and C130-C205. Residues N238 and N253 are each glycosylated (N-linked (GlcNAc...) (complex) asparagine). N272 carries N-linked (GlcNAc...) asparagine; in variant TA glycosylation. A glycan (N-linked (GlcNAc...) (complex) asparagine) is linked at N352.

This sequence belongs to the serpin family. In terms of assembly, interacts with MASP1. As to quaternary structure, (Microbial infection) Binds to E.coli stcE which allows localization of SERPING1 to cell membranes thus protecting the bacteria against complement-mediated lysis. Post-translationally, highly glycosylated (49%) with N- and O-glycosylation. O-glycosylated with core 1 or possibly core 8 glycans. N-glycan heterogeneity at Asn-25: Hex5HexNAc4 (minor), dHex1Hex5HexNAc4 (minor), Hex6HexNAc5 (major) and dHex1Hex6HexNAc5 (minor). In terms of processing, cleaved by C1S in vitro. (Microbial infection) Can be proteolytically cleaved by E.coli stcE.

It is found in the secreted. Its function is as follows. Serine protease inhibitor, which acrs as a regulator of the classical complement pathway. Forms a proteolytically inactive stoichiometric complex with the C1r or C1s proteases. May also regulate blood coagulation, fibrinolysis and the generation of kinins. Very efficient inhibitor of FXIIa. Inhibits chymotrypsin and kallikrein. The polypeptide is Plasma protease C1 inhibitor (SERPING1) (Homo sapiens (Human)).